The chain runs to 512 residues: Cytochrome P450 monooxygenase paxQ (512 aa).

2 helical membrane passes run 3-23 (FVLSALQRDSWGIAAIILVSI) and 35-55 (LQIPVPYVGKCGILGPWISAL). Cys-453 is a heme binding site.

This sequence belongs to the cytochrome P450 family. Heme is required as a cofactor.

It localises to the membrane. The protein operates within secondary metabolite biosynthesis. Its function is as follows. Cytochrome P450 monooxygenase; part of the gene cluster that mediates the biosynthesis of paxilline, a mycotoxin that acts as an inhibitor of mammalian maxi-K channels. PaxG, the geranylgeranyl diphosphate (GGPP) synthase is proposed to catalyze the first step in paxilline biosynthesis. Condensation of indole-3-glycerol phosphate with GGPP by paxC then forms 3-geranylgeranylindole (3-GGI), followed by epoxidation and cyclization of this intermediate (by paxM and paxB) to form paspaline. Paspaline is subsequently converted to 13-desoxypaxilline by paxP, the latter being then converted to paxilline by paxQ. Finally paxilline can be mono- and di-prenylated by paxD. PaxQ can also utilized beta-paxitriol and alpha-PC-M6 as substrates converting them to alpha-paxitriol. The chain is Cytochrome P450 monooxygenase paxQ from Penicillium paxilli.